The chain runs to 211 residues: Probable nicotinate-nucleotide adenylyltransferase (211 aa).

It belongs to the NadD family.

The catalysed reaction is nicotinate beta-D-ribonucleotide + ATP + H(+) = deamido-NAD(+) + diphosphate. The protein operates within cofactor biosynthesis; NAD(+) biosynthesis; deamido-NAD(+) from nicotinate D-ribonucleotide: step 1/1. In terms of biological role, catalyzes the reversible adenylation of nicotinate mononucleotide (NaMN) to nicotinic acid adenine dinucleotide (NaAD). This Gemmatimonas aurantiaca (strain DSM 14586 / JCM 11422 / NBRC 100505 / T-27) protein is Probable nicotinate-nucleotide adenylyltransferase.